We begin with the raw amino-acid sequence, 513 residues long: Glycogen synthase (513 aa).

An ADP-alpha-D-glucose-binding site is contributed by Lys47.

Belongs to the glycosyltransferase 1 family. Bacterial/plant glycogen synthase subfamily.

The enzyme catalyses [(1-&gt;4)-alpha-D-glucosyl](n) + ADP-alpha-D-glucose = [(1-&gt;4)-alpha-D-glucosyl](n+1) + ADP + H(+). It functions in the pathway glycan biosynthesis; glycogen biosynthesis. Synthesizes alpha-1,4-glucan chains using ADP-glucose. This is Glycogen synthase from Pseudomonas paraeruginosa (strain DSM 24068 / PA7) (Pseudomonas aeruginosa (strain PA7)).